A 302-amino-acid polypeptide reads, in one-letter code: Lipoyl synthase (302 aa).

Positions 44, 49, 55, 70, 74, 77, and 283 each coordinate [4Fe-4S] cluster. A Radical SAM core domain is found at 56 to 272 (WSKKHATVMI…AKVARSKGFL (217 aa)).

The protein belongs to the radical SAM superfamily. Lipoyl synthase family. [4Fe-4S] cluster serves as cofactor.

It is found in the cytoplasm. It carries out the reaction [[Fe-S] cluster scaffold protein carrying a second [4Fe-4S](2+) cluster] + N(6)-octanoyl-L-lysyl-[protein] + 2 oxidized [2Fe-2S]-[ferredoxin] + 2 S-adenosyl-L-methionine + 4 H(+) = [[Fe-S] cluster scaffold protein] + N(6)-[(R)-dihydrolipoyl]-L-lysyl-[protein] + 4 Fe(3+) + 2 hydrogen sulfide + 2 5'-deoxyadenosine + 2 L-methionine + 2 reduced [2Fe-2S]-[ferredoxin]. Its pathway is protein modification; protein lipoylation via endogenous pathway; protein N(6)-(lipoyl)lysine from octanoyl-[acyl-carrier-protein]: step 2/2. Functionally, catalyzes the radical-mediated insertion of two sulfur atoms into the C-6 and C-8 positions of the octanoyl moiety bound to the lipoyl domains of lipoate-dependent enzymes, thereby converting the octanoylated domains into lipoylated derivatives. This Orientia tsutsugamushi (strain Boryong) (Rickettsia tsutsugamushi) protein is Lipoyl synthase.